Here is a 369-residue protein sequence, read N- to C-terminus: Anhydro-N-acetylmuramic acid kinase (369 aa).

Glycine 12–aspartate 19 serves as a coordination point for ATP.

The protein belongs to the anhydro-N-acetylmuramic acid kinase family.

It carries out the reaction 1,6-anhydro-N-acetyl-beta-muramate + ATP + H2O = N-acetyl-D-muramate 6-phosphate + ADP + H(+). It functions in the pathway amino-sugar metabolism; 1,6-anhydro-N-acetylmuramate degradation. Its pathway is cell wall biogenesis; peptidoglycan recycling. Functionally, catalyzes the specific phosphorylation of 1,6-anhydro-N-acetylmuramic acid (anhMurNAc) with the simultaneous cleavage of the 1,6-anhydro ring, generating MurNAc-6-P. Is required for the utilization of anhMurNAc either imported from the medium or derived from its own cell wall murein, and thus plays a role in cell wall recycling. The chain is Anhydro-N-acetylmuramic acid kinase from Shewanella baltica (strain OS185).